The chain runs to 557 residues: Formate--tetrahydrofolate ligase (557 aa).

66–73 (TPAGEGKT) is a binding site for ATP.

This sequence belongs to the formate--tetrahydrofolate ligase family.

The enzyme catalyses (6S)-5,6,7,8-tetrahydrofolate + formate + ATP = (6R)-10-formyltetrahydrofolate + ADP + phosphate. It participates in one-carbon metabolism; tetrahydrofolate interconversion. The sequence is that of Formate--tetrahydrofolate ligase from Bartonella tribocorum (strain CIP 105476 / IBS 506).